We begin with the raw amino-acid sequence, 588 residues long: Adenine deaminase (588 aa).

The protein belongs to the metallo-dependent hydrolases superfamily. Adenine deaminase family. As to quaternary structure, homodimer. It depends on Mn(2+) as a cofactor.

The enzyme catalyses adenine + H2O + H(+) = hypoxanthine + NH4(+). The sequence is that of Adenine deaminase from Escherichia coli O6:H1 (strain CFT073 / ATCC 700928 / UPEC).